The chain runs to 495 residues: NAD(+)--protein-arginine ADP-ribosyltransferase Tre1 (495 aa).

The tract at residues 278–309 (PDLQIKGPTPVKKPEPLQPARQPEKASAPKPV) is disordered. Residues 315-495 (MSLREAVGNQ…VTQFILKEIP (181 aa)) enclose the TR mART core domain. The tract at residues 344-495 (RSALLTDDQI…VTQFILKEIP (152 aa)) is ART domain. Active-site residues include Arg-406, Ser-431, and Glu-466.

It belongs to the Arg-specific ADP-ribosyltransferase family.

Its subcellular location is the secreted. The protein localises to the host cytoplasm. It catalyses the reaction L-arginyl-[protein] + NAD(+) = N(omega)-(ADP-D-ribosyl)-L-arginyl-[protein] + nicotinamide + H(+). Toxic component of a contact-dependent interbacterial competition system (also called effector-immunity systems). Acts by ADP-ribosylating a number of target proteins in target cells; E.coli target proteins include FtsZ, EFTu, RNase E, Fis, YegQ, GuaB and IF2. This chain is NAD(+)--protein-arginine ADP-ribosyltransferase Tre1, found in Pseudomonas putida (strain GB-1).